Reading from the N-terminus, the 167-residue chain is Large ribosomal subunit protein uL10 (167 aa).

Belongs to the universal ribosomal protein uL10 family. As to quaternary structure, part of the ribosomal stalk of the 50S ribosomal subunit. The N-terminus interacts with L11 and the large rRNA to form the base of the stalk. The C-terminus forms an elongated spine to which L12 dimers bind in a sequential fashion forming a multimeric L10(L12)X complex.

Functionally, forms part of the ribosomal stalk, playing a central role in the interaction of the ribosome with GTP-bound translation factors. This Streptococcus thermophilus (strain CNRZ 1066) protein is Large ribosomal subunit protein uL10.